The primary structure comprises 242 residues: Cysteine-rich venom protein VAR11 (242 aa).

Positions 1-19 (MILLKLYLTLAAILCQSRG) are cleaved as a signal peptide. Residues 41–169 (NKHNDLRRTV…SLKYFQVCQY (129 aa)) form the SCP domain. Cystine bridges form between cysteine 77-cysteine 156, cysteine 95-cysteine 170, cysteine 151-cysteine 167, cysteine 189-cysteine 196, cysteine 192-cysteine 201, cysteine 205-cysteine 237, cysteine 214-cysteine 231, and cysteine 223-cysteine 235. In terms of domain architecture, ShKT spans 205–237 (CAYNDDYTSCPDLTKQVGCNHPVTANCKASCQC).

The protein belongs to the CRISP family. Expressed by the venom gland.

Its subcellular location is the secreted. Blocks ryanodine receptors, and potassium channels. The polypeptide is Cysteine-rich venom protein VAR11 (Varanus varius (Lace monitor lizard)).